Consider the following 404-residue polypeptide: Acetate kinase (404 aa).

Asparagine 7 contributes to the Mg(2+) binding site. Position 14 (lysine 14) interacts with ATP. Residue arginine 98 coordinates substrate. The Proton donor/acceptor role is filled by aspartate 155. Residues 214-218 (HLGNG), 289-291 (DLR), and 337-341 (GIGEN) each bind ATP. Residue glutamate 390 participates in Mg(2+) binding.

The protein belongs to the acetokinase family. In terms of assembly, homodimer. Requires Mg(2+) as cofactor. Mn(2+) is required as a cofactor.

Its subcellular location is the cytoplasm. It catalyses the reaction acetate + ATP = acetyl phosphate + ADP. It functions in the pathway metabolic intermediate biosynthesis; acetyl-CoA biosynthesis; acetyl-CoA from acetate: step 1/2. Functionally, catalyzes the formation of acetyl phosphate from acetate and ATP. Can also catalyze the reverse reaction. The chain is Acetate kinase from Rippkaea orientalis (strain PCC 8801 / RF-1) (Cyanothece sp. (strain PCC 8801)).